The chain runs to 474 residues: L-arabinose isomerase (474 aa).

4 residues coordinate Mn(2+): glutamate 306, glutamate 331, histidine 348, and histidine 447.

This sequence belongs to the arabinose isomerase family. It depends on Mn(2+) as a cofactor.

The enzyme catalyses beta-L-arabinopyranose = L-ribulose. It participates in carbohydrate degradation; L-arabinose degradation via L-ribulose; D-xylulose 5-phosphate from L-arabinose (bacterial route): step 1/3. Its function is as follows. Catalyzes the conversion of L-arabinose to L-ribulose. The chain is L-arabinose isomerase from Oceanobacillus iheyensis (strain DSM 14371 / CIP 107618 / JCM 11309 / KCTC 3954 / HTE831).